The chain runs to 410 residues: Peptidase T (410 aa).

The interval 11–30 (RYAEIDTQSDPDSESTPSTE) is disordered. A Zn(2+)-binding site is contributed by H78. The active site involves D80. Residue D140 coordinates Zn(2+). E174 serves as the catalytic Proton acceptor. Zn(2+) is bound by residues E175, D197, and H379.

The protein belongs to the peptidase M20B family. Zn(2+) serves as cofactor.

It is found in the cytoplasm. The enzyme catalyses Release of the N-terminal residue from a tripeptide.. Functionally, cleaves the N-terminal amino acid of tripeptides. The chain is Peptidase T from Staphylococcus carnosus (strain TM300).